The sequence spans 545 residues: Probable target of rapamycin complex 2 subunit BIT2 (545 aa).

Disordered regions lie at residues 1–24 and 78–166; these read MATDLNRKRSATSGSLSVTNPNIK and DGSN…GTSS. Composition is skewed to polar residues over residues 11–24, 106–130, and 151–166; these read ATSGSLSVTNPNIK, IGSSSSNRMEGNTTSNDSLFSSNSR, and RSGSKNYGTVITGTSS.

As to quaternary structure, interacts with the target of rapamycin complex 2 (TORC2) subunit TSC11 and the TORC2 effectors SLM1 and SLM2.

In Saccharomyces cerevisiae (strain ATCC 204508 / S288c) (Baker's yeast), this protein is Probable target of rapamycin complex 2 subunit BIT2 (BIT2).